Here is a 493-residue protein sequence, read N- to C-terminus: Cytochrome c-552 (493 aa).

Positions 1 to 25 (MEKKLKSWQGWLLFCGAMAVVFVLG) are cleaved as a signal peptide. His-116 is a binding site for heme c. Heme-binding residues include Cys-144, Cys-147, and Lys-148. Residues Cys-182, Cys-185, His-186, Cys-224, Cys-227, and His-228 each contribute to the heme c site. Residues Glu-230, Tyr-231, Lys-276, and Gln-278 each coordinate Ca(2+). Residue Tyr-231 participates in substrate binding. His-279 serves as a coordination point for substrate. Heme c is bound by residues His-290, Cys-297, Cys-300, His-301, His-315, Cys-328, Cys-331, His-332, and His-407.

This sequence belongs to the cytochrome c-552 family. It depends on Ca(2+) as a cofactor. Heme c is required as a cofactor.

The protein localises to the periplasm. It catalyses the reaction 6 Fe(III)-[cytochrome c] + NH4(+) + 2 H2O = 6 Fe(II)-[cytochrome c] + nitrite + 8 H(+). It functions in the pathway nitrogen metabolism; nitrate reduction (assimilation). Its function is as follows. Catalyzes the reduction of nitrite to ammonia, consuming six electrons in the process. The protein is Cytochrome c-552 of Bacteroides fragilis (strain YCH46).